Consider the following 124-residue polypeptide: Ribosome-binding factor A (124 aa).

This sequence belongs to the RbfA family. Monomer. Binds 30S ribosomal subunits, but not 50S ribosomal subunits or 70S ribosomes.

The protein localises to the cytoplasm. Its function is as follows. One of several proteins that assist in the late maturation steps of the functional core of the 30S ribosomal subunit. Associates with free 30S ribosomal subunits (but not with 30S subunits that are part of 70S ribosomes or polysomes). Required for efficient processing of 16S rRNA. May interact with the 5'-terminal helix region of 16S rRNA. The chain is Ribosome-binding factor A from Thiobacillus denitrificans (strain ATCC 25259 / T1).